Here is a 115-residue protein sequence, read N- to C-terminus: MEARAQARYIRVTPMKARRVVDLIRGMDATEAQAVLRFAPQAASVPVGKVLDSAIANAAHNYDHTDASSLVISEAYVDEGPTLKRFRPRAQGRAYRIRKRTSHITVVVSSKEGTR.

This sequence belongs to the universal ribosomal protein uL22 family. In terms of assembly, part of the 50S ribosomal subunit.

This protein binds specifically to 23S rRNA; its binding is stimulated by other ribosomal proteins, e.g. L4, L17, and L20. It is important during the early stages of 50S assembly. It makes multiple contacts with different domains of the 23S rRNA in the assembled 50S subunit and ribosome. Its function is as follows. The globular domain of the protein is located near the polypeptide exit tunnel on the outside of the subunit, while an extended beta-hairpin is found that lines the wall of the exit tunnel in the center of the 70S ribosome. The chain is Large ribosomal subunit protein uL22 from Streptomyces griseus subsp. griseus (strain JCM 4626 / CBS 651.72 / NBRC 13350 / KCC S-0626 / ISP 5235).